The following is a 450-amino-acid chain: Probable ECA polymerase (450 aa).

The next 11 membrane-spanning stretches (helical) occupy residues 6-26 (FSGL…LTWF), 37-57 (VFFS…TSVL), 63-83 (VGVA…CFYA), 120-140 (LMGI…FLLF), 155-175 (GVAL…IYFL), 181-201 (AWLF…MIVG), 207-227 (IIIA…ISLW), 228-248 (MLVA…LKRY), 341-361 (LVVM…GLII), 378-398 (YKAA…IVLA), and 410-430 (VFFL…FWLF).

Belongs to the WzyE family. As to quaternary structure, probably part of a complex composed of WzxE, WzyE and WzzE.

The protein localises to the cell inner membrane. It functions in the pathway bacterial outer membrane biogenesis; enterobacterial common antigen biosynthesis. Functionally, probably involved in the polymerization of enterobacterial common antigen (ECA) trisaccharide repeat units. This chain is Probable ECA polymerase, found in Citrobacter koseri (strain ATCC BAA-895 / CDC 4225-83 / SGSC4696).